The sequence spans 267 residues: Putative phosphatase bbp_030 (267 aa).

Asp8 acts as the Nucleophile in catalysis. Residue Asp8 coordinates Mg(2+). Leu9 contacts phosphate. Asp10 provides a ligand contact to Mg(2+). Residues 42–43 (TG) and Lys191 each bind phosphate. Mg(2+) is bound at residue Asp214. Asn217 contacts phosphate.

The protein belongs to the HAD-like hydrolase superfamily. Cof family. Mg(2+) is required as a cofactor.

The polypeptide is Putative phosphatase bbp_030 (Buchnera aphidicola subsp. Baizongia pistaciae (strain Bp)).